Consider the following 526-residue polypeptide: MNSASFLQSRLISRSFLVRRSLKRYSGLAKPYTFQQPTIYALSTPANQTSAIAIIRISGTHAKYIYNRLVDSSTVPPIRKAILRNIYSPSSCSVKPHDQKESKILLDTSLLLYFQAPYSFTGEDVLELHVHGGKAVVNSILKAIGSLHDRSSGKDIRFALPGDFSRRAFQNGKFDLTQLEGIKDLIDSETESQRRSALSSFNGDNKILFENWRETIIENMAQLTAIIDFADDNSQEIQNTDEIFHNVEKNIICLRDQIVTFMQKVEKSTILQNGIKLVLLGAPNVGKSSLVNSLTNDDISIVSDIPGTTRDSIDAMINVNGYKVIICDTAGIREKSSDKIEMLGIDRAKKKSVQSDLCLFIVDPTDLSKLLPEDILAHLSSKTFGNKRIIIVVNKSDLVSDDEMTKVLNKLQTRLGSKYPILSVSCKTKEGIESLISTLTSNFESLSQSSADASPVIVSKRVSEILKNDVLYGLEEFFKSKDFHNDIVLATENLRYASDGIAKITGQAIGIEEILDSVFSKFCIGK.

Residues 1–19 (MNSASFLQSRLISRSFLVR) constitute a mitochondrion transit peptide. The 171-residue stretch at 274–444 (GIKLVLLGAP…LISTLTSNFE (171 aa)) folds into the TrmE-type G domain. GTP contacts are provided by residues 281-288 (GAPNVGKS), 328-332 (DTAGI), and 394-397 (NKSD).

Belongs to the TRAFAC class TrmE-Era-EngA-EngB-Septin-like GTPase superfamily. TrmE GTPase family. Forms a heterodimer with MTO1.

It is found in the mitochondrion. In terms of biological role, GTPase involved in the 5-carboxymethylaminomethyl modification (mnm(5)s(2)U34) of the wobble uridine base in mitochondrial tRNAs. Involved in the expression of cytochrome c oxidase subunit 1 (COX1). Works in association with the small subunit of mitoribosomes. The chain is tRNA modification GTPase MSS1, mitochondrial (MSS1) from Saccharomyces cerevisiae (strain ATCC 204508 / S288c) (Baker's yeast).